Reading from the N-terminus, the 154-residue chain is Aspartate carbamoyltransferase regulatory chain (154 aa).

4 residues coordinate Zn(2+): Cys109, Cys114, Cys138, and Cys141.

The protein belongs to the PyrI family. In terms of assembly, contains catalytic and regulatory chains. The cofactor is Zn(2+).

In terms of biological role, involved in allosteric regulation of aspartate carbamoyltransferase. The sequence is that of Aspartate carbamoyltransferase regulatory chain from Tolumonas auensis (strain DSM 9187 / NBRC 110442 / TA 4).